The primary structure comprises 307 residues: Undecaprenyl-diphosphatase 2 (307 aa).

The next 8 membrane-spanning stretches (helical) occupy residues 19–41 (GVTE…IIGF), 56–76 (IHMF…VLYW), 117–137 (FKFW…GLPF), 144–164 (LLFF…WMIF), 208–228 (IIGA…SFFL), 229–249 (AIPM…VVLS), 251–271 (VQIL…LVVV), and 285–305 (IFAV…FTKV).

Belongs to the UppP family.

The protein localises to the cell membrane. It catalyses the reaction di-trans,octa-cis-undecaprenyl diphosphate + H2O = di-trans,octa-cis-undecaprenyl phosphate + phosphate + H(+). Catalyzes the dephosphorylation of undecaprenyl diphosphate (UPP). Confers resistance to bacitracin. The protein is Undecaprenyl-diphosphatase 2 of Clostridium acetobutylicum (strain ATCC 824 / DSM 792 / JCM 1419 / IAM 19013 / LMG 5710 / NBRC 13948 / NRRL B-527 / VKM B-1787 / 2291 / W).